Here is a 1148-residue protein sequence, read N- to C-terminus: Protein pianissimo A (1148 aa).

A compositionally biased stretch (low complexity) spans 1 to 34; the sequence is MTSSDSSVNTTSSSFGNISISSPNHSSSTPPLNN. Residues 1-41 form a disordered region; the sequence is MTSSDSSVNTTSSSFGNISISSPNHSSSTPPLNNGNGNNVS. An N-terminal Ras-GEF domain is found at 803-914; it reads KVSALSLNVL…STSGVYLPPH (112 aa).

The protein belongs to the RICTOR family. As to quaternary structure, part of a complex, TORC2, consisting of tor, lst8, piaA and ripA. Additional proteins, such as 14-3-3 and heat-shock proteins, may also belong to the TORC2 complex.

It localises to the cytoplasm. Its function is as follows. Regulates cell growth, chemotaxis, signal relay and the actin cytoskeleton. Required for chemoattractant receptor and G protein-mediated activation of the 12 transmembrane domain adenylyl cyclase. Functions as a part of protein complex TORC2. TORC2, is presumed to be indirectly negatively modulated by rapamycin and regulates actin polarization. TORC2, but not TORC1, negatively regulates phagocytosis. This protein and dagA protein CRAC, a cytosolic regulator, are both essential for activation of the enzyme adenylyl cyclase. This protein and CRAC do not function redundantly. Both proteins are integral components of the adenylyl cyclase activation pathway. This chain is Protein pianissimo A (piaA), found in Dictyostelium discoideum (Social amoeba).